The sequence spans 114 residues: Large ribosomal subunit protein bL20c (114 aa).

This sequence belongs to the bacterial ribosomal protein bL20 family.

The protein localises to the plastid. The protein resides in the cyanelle. Binds directly to 23S ribosomal RNA and is necessary for the in vitro assembly process of the 50S ribosomal subunit. It is not involved in the protein synthesizing functions of that subunit. The chain is Large ribosomal subunit protein bL20c (rpl20) from Cyanophora paradoxa.